The chain runs to 230 residues: 5'-methylthioadenosine/S-adenosylhomocysteine nucleosidase (230 aa).

Glutamate 12 functions as the Proton acceptor in the catalytic mechanism. Residues glycine 78, methionine 153, and methionine 174–glutamate 175 contribute to the substrate site. Aspartate 198 serves as the catalytic Proton donor.

It belongs to the PNP/UDP phosphorylase family. MtnN subfamily.

It carries out the reaction S-adenosyl-L-homocysteine + H2O = S-(5-deoxy-D-ribos-5-yl)-L-homocysteine + adenine. The catalysed reaction is S-methyl-5'-thioadenosine + H2O = 5-(methylsulfanyl)-D-ribose + adenine. It catalyses the reaction 5'-deoxyadenosine + H2O = 5-deoxy-D-ribose + adenine. The protein operates within amino-acid biosynthesis; L-methionine biosynthesis via salvage pathway; S-methyl-5-thio-alpha-D-ribose 1-phosphate from S-methyl-5'-thioadenosine (hydrolase route): step 1/2. In terms of biological role, catalyzes the irreversible cleavage of the glycosidic bond in both 5'-methylthioadenosine (MTA) and S-adenosylhomocysteine (SAH/AdoHcy) to adenine and the corresponding thioribose, 5'-methylthioribose and S-ribosylhomocysteine, respectively. Also cleaves 5'-deoxyadenosine, a toxic by-product of radical S-adenosylmethionine (SAM) enzymes, into 5-deoxyribose and adenine. The chain is 5'-methylthioadenosine/S-adenosylhomocysteine nucleosidase from Lysinibacillus sphaericus (strain C3-41).